The sequence spans 172 residues: Caltractin (172 aa).

The segment at 1–23 (MQKYGSKKIGATSATSSNKQKVQ) is disordered. Positions 12–21 (TSATSSNKQK) are enriched in polar residues. EF-hand domains are found at residues 29–64 (EQRQEIKEAFDLFDMDGSGKIDAKELKVAMRALGFE), 65–99 (PKKEEIKKMISGIDNGSGKIDFNDFLQLMTAKMSE), 101–136 (DSHAEIMKAFRLFDEDDSGFITFANLKRVAKDLGEN), and 137–172 (MTDEELREMIEEADRSNQGQISKEDFLRIMKKTNLF). Residues Asp42, Asp44, Ser46, Lys48, and Glu53 each coordinate Ca(2+).

Belongs to the centrin family. As to quaternary structure, monomer.

The protein resides in the cytoplasm. It is found in the cytoskeleton. It localises to the microtubule organizing center. The protein localises to the centrosome. Its function is as follows. Plays a fundamental role in microtubule-organizing center structure and function. In Naegleria gruberi (Amoeba), this protein is Caltractin (CTN).